The following is a 202-amino-acid chain: Imidazoleglycerol-phosphate dehydratase (202 aa).

Belongs to the imidazoleglycerol-phosphate dehydratase family.

It localises to the cytoplasm. The catalysed reaction is D-erythro-1-(imidazol-4-yl)glycerol 3-phosphate = 3-(imidazol-4-yl)-2-oxopropyl phosphate + H2O. It functions in the pathway amino-acid biosynthesis; L-histidine biosynthesis; L-histidine from 5-phospho-alpha-D-ribose 1-diphosphate: step 6/9. The protein is Imidazoleglycerol-phosphate dehydratase of Sinorhizobium fredii (strain NBRC 101917 / NGR234).